A 386-amino-acid polypeptide reads, in one-letter code: GTPase Obg (386 aa).

The 159-residue stretch at 1-159 (MKFVDEAVIR…RSLKLELMLL (159 aa)) folds into the Obg domain. An OBG-type G domain is found at 160 to 333 (ADVGLLGMPN…LSLKLVDFID (174 aa)). Residues 166–173 (GMPNAGKS), 191–195 (FTTLV), 213–216 (DIPG), 283–286 (NKKD), and 314–316 (SAY) contribute to the GTP site. Mg(2+) is bound by residues S173 and T193. The segment at 356–375 (KDSDSLNEDFDDSDDDDFDD) is disordered. The segment covering 360 to 375 (SLNEDFDDSDDDDFDD) has biased composition (acidic residues).

Belongs to the TRAFAC class OBG-HflX-like GTPase superfamily. OBG GTPase family. Monomer. It depends on Mg(2+) as a cofactor.

The protein resides in the cytoplasm. Functionally, an essential GTPase which binds GTP, GDP and possibly (p)ppGpp with moderate affinity, with high nucleotide exchange rates and a fairly low GTP hydrolysis rate. Plays a role in control of the cell cycle, stress response, ribosome biogenesis and in those bacteria that undergo differentiation, in morphogenesis control. This chain is GTPase Obg, found in Shewanella sediminis (strain HAW-EB3).